The chain runs to 637 residues: MSLQCSSRSLCRGGGGSRNFSSGSAGLVSFQRRSTSSSMRRSGGGGGGRFSGGGFCGSSGSGFGSKSLMNLGGGRSISKSVAGGGGSFCGGFGGGSYGGGGFGGGSYGGGGFGGGSFGGGGFGGSGFGGGLGGGGGFGSGGGFGGGRFGSMGPVCPPGGIQEVTINQSLLQPLNVEVDPQIQKVKSQEREQIKSLNDKFASFIDKVRFLEQQNQVLQTKWELLQQVDTTTRTQNLDPFFENYISILRRKVDSLKSDQSRMDSELKNMQDLVEEYRTKYEDEINKRTNAENEFVTIKKDVDSAYMTKVELQAKADALQQDIDFFSALYQMEMSQMQTQISETNVVLSMDNNRSLDLDGIISEVKAQYDSICQRSKAEAETFYQSKYEELQITAGKHGDSVRNTKMEISELNRMIQRLRSEIDGCKKQISQIQQNINDAEQRGEKALKDAQNKLNEIEDALSQCKEDLARLLRDFQELMNTKLALDMEIATYKKLLEGEEIRMSGECTPNVSVSVSTSHTSMSGSSSRGGGSGGGRYGGGGSYGGGSGGGSYGGSSGGGGSGGSYGGGSGGGSYGGGSGGGSSGSHRGGSGGGGGSSGGSYGGSSGGGRGGSSSGGGGVKSSGSSTVKFVSTSYSRGTK.

Positions 1 to 187 are head; sequence MSLQCSSRSL…DPQIQKVKSQ (187 aa). Arg-12 bears the Omega-N-methylarginine mark. Phosphoserine occurs at positions 21 and 24. An Omega-N-methylarginine modification is found at Arg-49. Residue Ser-67 is modified to Phosphoserine. Positions 180–328 form a coiled coil; that stretch reads QIQKVKSQER…DIDFFSALYQ (149 aa). The segment at 188-223 is coil 1A; sequence EREQIKSLNDKFASFIDKVRFLEQQNQVLQTKWELL. The region spanning 188–501 is the IF rod domain; sequence EREQIKSLND…KLLEGEEIRM (314 aa). Residues 224 to 243 are linker 1; sequence QQVDTTTRTQNLDPFFENYI. The coil 1B stretch occupies residues 244-334; that stretch reads SILRRKVDSL…ALYQMEMSQM (91 aa). Position 284 is an N6,N6-dimethyllysine (Lys-284). Residues 335 to 358 form a linker 12 region; it reads QTQISETNVVLSMDNNRSLDLDGI. Ser-352 bears the Phosphoserine mark. The tract at residues 359–497 is coil 2; the sequence is ISEVKAQYDS…ATYKKLLEGE (139 aa). A coiled-coil region spans residues 397–483; sequence DSVRNTKMEI…QELMNTKLAL (87 aa). The interval 498–637 is tail; the sequence is EIRMSGECTP…VSTSYSRGTK (140 aa). Disordered stretches follow at residues 505 to 533 and 563 to 637; these read CTPN…SGGG and YGGG…RGTK. Positions 509–524 are enriched in low complexity; sequence VSVSVSTSHTSMSGSS. Residues Arg-526, Arg-585, and Arg-607 each carry the omega-N-methylarginine modification. Over residues 563 to 618 the composition is skewed to gly residues; that stretch reads YGGGSGGGSYGGGSGGGSSGSHRGGSGGGGGSSGGSYGGSSGGGRGGSSSGGGGVK. The segment covering 624–637 has biased composition (polar residues); sequence TVKFVSTSYSRGTK.

The protein belongs to the intermediate filament family. As to quaternary structure, heterotetramer of two type I and two type II keratins. Heterodimer with KRT10. Two heterodimers of KRT1 and KRT10 form a heterotetramer. Forms a heterodimer with KRT14; the interaction is more abundant in the absence of KRT5. Interacts with PLEC isoform 1C, when in a heterodimer with KRT10. Interacts with ITGB1 in the presence of RACK1 and SRC, and with RACK1. Interacts with C1QBP; the association represents a cell surface kininogen receptor. Interacts with EPPK1; interaction is dependent of higher-order structure of intermediate filament. Undergoes deimination of some arginine residues (citrullination). In terms of tissue distribution, expressed in the infundibular regions of the ear, the interfollicular epidermis of the back, in the interscale regions containing hair follicles in the tail, and in the soles of the footpads (at protein level).

It localises to the cell membrane. The protein resides in the cytoplasm. Functionally, may regulate the activity of kinases such as PKC and SRC via binding to integrin beta-1 (ITB1) and the receptor of activated protein C kinase 1 (RACK1). In complex with C1QBP is a high affinity receptor for kininogen-1/HMWK. In Mus musculus (Mouse), this protein is Keratin, type II cytoskeletal 1 (Krt1).